The primary structure comprises 240 residues: Tetraspanin-1 (240 aa).

Residues 1–9 (MQCFSFIKT) are Cytoplasmic-facing. The chain crosses the membrane as a helical span at residues 10–30 (IMILFNLLIFLCGAALLAVGI). Residues 31–52 (WVSIDGASFLKIFGPLSSSAMQ) are Extracellular-facing. Residues 53–73 (FVNVGYFLIAAGAVVFALGFL) form a helical membrane-spanning segment. At 74–88 (GCYGAQTESKCALMT) the chain is on the cytoplasmic side. Residues 89–109 (FFFILLLIFIAEVAAAVVALV) traverse the membrane as a helical segment. Over 110 to 210 (YTTMAEHFLT…QQLLYDIRTN (101 aa)) the chain is Extracellular. Asn-154 carries N-linked (GlcNAc...) asparagine glycosylation. The chain crosses the membrane as a helical span at residues 211 to 231 (AVTVGGVAAGIGGLELAAMIV). Over 232–240 (SMYLYCNLQ) the chain is Cytoplasmic.

The protein belongs to the tetraspanin (TM4SF) family. In terms of assembly, interacts with SLC19A2. Interacts with NTRK1/TRKA.

The protein localises to the lysosome membrane. Functionally, structural component of specialized membrane microdomains known as tetraspanin-enriched microdomains (TERMs), which act as platforms for receptor clustering and signaling. Participates thereby in diverse biological functions such as cell signal transduction, adhesion, migration and protein trafficking. Regulates neuronal differentiation in response to NGF by facilitating NGF-mediated activation of NTRK1/TRKA receptor tyrosine kinase and subsequent downstream signaling pathways. Plays a role in the inhibition of TNFalpha-induced apoptosis. Mechanistically, inhibits the NF-kappa-B signaling pathway by blocking phosphorylation of CHUK. Also promotes the stability of the thiamine transporter 1/SLC19A2 in intestinal epithelial cells leading to an increase of thiamine uptake process. This is Tetraspanin-1 (TSPAN1) from Macaca fascicularis (Crab-eating macaque).